The sequence spans 700 residues: Interleukin-1 receptor accessory protein-like 1-B (700 aa).

A signal peptide spans 1 to 18 (MRSRVPLQILLYAAVIRS). Residues 19 to 357 (LKVVSKRGSV…QLSRRELMYT (339 aa)) are Extracellular-facing. One can recognise an Ig-like C2-type 1 domain in the interval 32 to 134 (TDWSVDYLRY…YCMKVSMALT (103 aa)). Cys-53 and Cys-118 form a disulfide bridge. Asn-63, Asn-122, Asn-138, Asn-213, Asn-264, and Asn-331 each carry an N-linked (GlcNAc...) asparagine glycan. 2 Ig-like C2-type domains span residues 143-232 (CYNS…TELT) and 242-350 (PKIL…IQLS). An intrachain disulfide couples Cys-164 to Cys-216. Cys-267 and Cys-334 form a disulfide bridge. A helical membrane pass occupies residues 358–378 (VELAGGLGAILLMLIFLVSLY). The Cytoplasmic portion of the chain corresponds to 379 to 700 (KCYRIELMLF…RETSISSVIW (322 aa)). Positions 403 to 559 (KDYDAYVSYT…RFWKQLQYEM (157 aa)) constitute a TIR domain. Residue Glu-491 is part of the active site. The segment at 564 to 700 (PEPKLSHEQV…RETSISSVIW (137 aa)) is required for synaptic vesicle accumulation during synaptogenesis.

This sequence belongs to the interleukin-1 receptor family.

It localises to the cell membrane. The protein resides in the cytoplasm. The enzyme catalyses NAD(+) + H2O = ADP-D-ribose + nicotinamide + H(+). Functionally, may regulate secretion and presynaptic differentiation through inhibition of the activity of N-type voltage-gated calcium channel. During presynaptic differentiation may regulate both synaptic vesicle accumulation in axon terminals and subsequent axon terminal remodeling. The polypeptide is Interleukin-1 receptor accessory protein-like 1-B (il1rapl1b) (Danio rerio (Zebrafish)).